The chain runs to 804 residues: Leucine--tRNA ligase (804 aa).

The 'HIGH' region signature appears at 39–50 (PFPSGKGLHVGH). A 'KMSKS' region motif is present at residues 573 to 577 (KMSKS). Residue lysine 576 participates in ATP binding.

This sequence belongs to the class-I aminoacyl-tRNA synthetase family.

The protein resides in the cytoplasm. The catalysed reaction is tRNA(Leu) + L-leucine + ATP = L-leucyl-tRNA(Leu) + AMP + diphosphate. The chain is Leucine--tRNA ligase from Lactobacillus helveticus (strain DPC 4571).